The chain runs to 96 residues: RNA-binding protein Hfq (96 aa).

One can recognise a Sm domain in the interval 9 to 68; sequence DPYLNALRRERIPVSIYLVNGIKLQGQIESFDQFVILLKNTVNQMVYKHAISTVVPARSV.

Belongs to the Hfq family. Homohexamer.

Functionally, RNA chaperone that binds small regulatory RNA (sRNAs) and mRNAs to facilitate mRNA translational regulation in response to envelope stress, environmental stress and changes in metabolite concentrations. Also binds with high specificity to tRNAs. The polypeptide is RNA-binding protein Hfq (Histophilus somni (strain 129Pt) (Haemophilus somnus)).